A 301-amino-acid chain; its full sequence is tRNA uridine(34) hydroxylase (301 aa).

One can recognise a Rhodanese domain in the interval 120-214 (SAPDVAVIDT…YLEDVPEDQS (95 aa)). The active-site Cysteine persulfide intermediate is the Cys-174.

This sequence belongs to the TrhO family.

The enzyme catalyses uridine(34) in tRNA + AH2 + O2 = 5-hydroxyuridine(34) in tRNA + A + H2O. In terms of biological role, catalyzes oxygen-dependent 5-hydroxyuridine (ho5U) modification at position 34 in tRNAs. This Jannaschia sp. (strain CCS1) protein is tRNA uridine(34) hydroxylase.